Here is a 524-residue protein sequence, read N- to C-terminus: uncharacterized protein (524 aa).

The span at 83–101 shows a compositional bias: polar residues; the sequence is NSTPSKQAKPLQRNSPYQG. 2 disordered regions span residues 83–108 and 155–179; these read NSTP…SENQ and PPCN…KRPR.

Its subcellular location is the cytoplasm. This is an uncharacterized protein from Saccharomyces cerevisiae (strain ATCC 204508 / S288c) (Baker's yeast).